The primary structure comprises 38 residues: Photosystem II reaction center protein L (38 aa).

A helical membrane pass occupies residues 17-37 (SLYWGLLLIFVLAILFSNYFF).

This sequence belongs to the PsbL family. PSII is composed of 1 copy each of membrane proteins PsbA, PsbB, PsbC, PsbD, PsbE, PsbF, PsbH, PsbI, PsbJ, PsbK, PsbL, PsbM, PsbT, PsbX, PsbY, PsbZ, Psb30/Ycf12, at least 3 peripheral proteins of the oxygen-evolving complex and a large number of cofactors. It forms dimeric complexes.

It is found in the plastid. The protein resides in the chloroplast thylakoid membrane. One of the components of the core complex of photosystem II (PSII). PSII is a light-driven water:plastoquinone oxidoreductase that uses light energy to abstract electrons from H(2)O, generating O(2) and a proton gradient subsequently used for ATP formation. It consists of a core antenna complex that captures photons, and an electron transfer chain that converts photonic excitation into a charge separation. This subunit is found at the monomer-monomer interface and is required for correct PSII assembly and/or dimerization. This chain is Photosystem II reaction center protein L, found in Aethionema cordifolium (Lebanon stonecress).